The primary structure comprises 201 residues: dITP/XTP pyrophosphatase (201 aa).

Substrate is bound at residue 8-13 (SNNPGK). Mg(2+)-binding residues include Glu-40 and Asp-69. Asp-69 serves as the catalytic Proton acceptor. Residues Ser-70, 155 to 158 (FGYD), Lys-178, and 183 to 184 (HR) each bind substrate.

It belongs to the HAM1 NTPase family. As to quaternary structure, homodimer. Requires Mg(2+) as cofactor.

It catalyses the reaction XTP + H2O = XMP + diphosphate + H(+). It carries out the reaction dITP + H2O = dIMP + diphosphate + H(+). The catalysed reaction is ITP + H2O = IMP + diphosphate + H(+). Functionally, pyrophosphatase that catalyzes the hydrolysis of nucleoside triphosphates to their monophosphate derivatives, with a high preference for the non-canonical purine nucleotides XTP (xanthosine triphosphate), dITP (deoxyinosine triphosphate) and ITP. Seems to function as a house-cleaning enzyme that removes non-canonical purine nucleotides from the nucleotide pool, thus preventing their incorporation into DNA/RNA and avoiding chromosomal lesions. This chain is dITP/XTP pyrophosphatase, found in Ralstonia nicotianae (strain ATCC BAA-1114 / GMI1000) (Ralstonia solanacearum).